Here is a 127-residue protein sequence, read N- to C-terminus: MKEQVEIRTLKEGRYIIIDDEPCIIKSIAHSKPGKHGAAKARIDAIGIFDNQKRSIVAPVTTKVYAPIVERKTGQVLSVGETSVQLMDLKDYTTIDVPITEDMKPKLEPGKEVAYLSSMGKVKMDIR.

The residue at position 35 (Lys-35) is a Hypusine.

The protein belongs to the eIF-5A family.

The protein resides in the cytoplasm. Its function is as follows. Functions by promoting the formation of the first peptide bond. This is Translation initiation factor 5A (eIF5A) from Methanothrix thermoacetophila (strain DSM 6194 / JCM 14653 / NBRC 101360 / PT) (Methanosaeta thermophila).